The primary structure comprises 621 residues: Lethal(3)malignant brain tumor-like protein 4 (621 aa).

The tract at residues 1–48 (MRQPNRKRKLSLESTERMNQDRCTGQTEEEKKPGEVTTPSKRESSVTT) is disordered. Composition is skewed to basic and acidic residues over residues 10–20 (LSLESTERMNQ) and 28–44 (EEEK…KRES). 3 MBT repeats span residues 52–152 (WSWE…LHIP), 160–260 (FVWM…LVAP), and 269–364 (FSWT…LEVP). The segment at 370-414 (VKILPGQPACPTPGCRGIGHIRGPRYAGHHSAFGCPYSDVNLKRE) adopts a CCHHC-type zinc-finger fold. Residues C379, C384, H398, and C404 each contribute to the Zn(2+) site. The SAM domain maps to 543–607 (WTVDEVAEFV…YNSILMFRNS (65 aa)).

It is found in the nucleus. Functionally, putative Polycomb group (PcG) protein. PcG proteins maintain the transcriptionally repressive state of genes, probably via a modification of chromatin, rendering it heritably changed in its expressibility. In Mus musculus (Mouse), this protein is Lethal(3)malignant brain tumor-like protein 4 (L3mbtl4).